Consider the following 223-residue polypeptide: Noggin (223 aa).

Positions 1 to 26 (MDPPRLRVATYLLLLSVGLLLHGGAC) are cleaved as a signal peptide. Asparagine 61 is a glycosylation site (N-linked (GlcNAc...) asparagine). Disulfide bonds link cysteine 143/cysteine 180, cysteine 166/cysteine 217, cysteine 172/cysteine 219, and cysteine 195/cysteine 204.

Belongs to the noggin family. In terms of assembly, homodimer.

The protein resides in the secreted. Inhibitor of bone morphogenetic proteins (BMP) signaling. The chain is Noggin (nog) from Takifugu rubripes (Japanese pufferfish).